Consider the following 62-residue polypeptide: MTIAFQLAVFALIATSSLLLISVPVVFASPEGWSSNKNVVFSGTSLWIGLVFLVGILNSLIS.

2 consecutive transmembrane segments (helical) span residues alanine 8–alanine 28 and phenylalanine 41–isoleucine 61.

The protein belongs to the PsbZ family. PSII is composed of 1 copy each of membrane proteins PsbA, PsbB, PsbC, PsbD, PsbE, PsbF, PsbH, PsbI, PsbJ, PsbK, PsbL, PsbM, PsbT, PsbY, PsbZ, Psb30/Ycf12, at least 3 peripheral proteins of the oxygen-evolving complex and a large number of cofactors. It forms dimeric complexes.

The protein localises to the plastid. It is found in the chloroplast thylakoid membrane. Its function is as follows. May control the interaction of photosystem II (PSII) cores with the light-harvesting antenna, regulates electron flow through the 2 photosystem reaction centers. PSII is a light-driven water plastoquinone oxidoreductase, using light energy to abstract electrons from H(2)O, generating a proton gradient subsequently used for ATP formation. This chain is Photosystem II reaction center protein Z, found in Oenothera elata subsp. hookeri (Hooker's evening primrose).